Reading from the N-terminus, the 435-residue chain is Nucleoredoxin (435 aa).

Residue Ser2 is modified to N-acetylserine. The Thioredoxin domain occupies 167 to 314 (PKPFREVIAG…FPWHPKPVLE (148 aa)).

The protein belongs to the nucleoredoxin family. Associates with the phosphatase 2A holoenzyme. Interacts with PPP2CA; the interaction is direct. Interacts with DVL1 (via PDZ domain); the interaction is direct and regulated by oxidative stress. Widely expressed with higher expression in testis and skin.

The protein resides in the cytoplasm. The protein localises to the cytosol. It is found in the nucleus. The catalysed reaction is [protein]-dithiol + NAD(+) = [protein]-disulfide + NADH + H(+). The enzyme catalyses [protein]-dithiol + NADP(+) = [protein]-disulfide + NADPH + H(+). Its function is as follows. Functions as a redox-dependent negative regulator of the Wnt signaling pathway, possibly by preventing ubiquitination of DVL3 by the BCR(KLHL12) complex. May also function as a transcriptional regulator act as a regulator of protein phosphatase 2A (PP2A). The protein is Nucleoredoxin (Nxn) of Mus musculus (Mouse).